The primary structure comprises 168 residues: Mitochondrial import inner membrane translocase subunit TIM14 (168 aa).

Positions methionine 1 to glutamate 12 are enriched in polar residues. The segment at methionine 1–threonine 29 is disordered. The Mitochondrial intermembrane portion of the chain corresponds to methionine 1–proline 65. The helical transmembrane segment at valine 66 to tyrosine 83 threads the bilayer. At lysine 84–lysine 168 the chain is on the mitochondrial matrix side. Positions glutamate 112–lysine 168 constitute a J domain.

It belongs to the TIM14 family. In terms of assembly, homodimer and heterodimer with PAM16/TIM16. Homodimerization may not be relevant in vivo, while heterodimerization is essential for activity regulation of mtHSP70. Component of the PAM complex, at least composed of mtHsp70, MGE1, TIM44, PAM16, PAM17 and PAM18/TIM14. Interacts directly with mtHsp70. Interacts directly with TIM17 subunit of the TIM23 complex.

Its subcellular location is the mitochondrion inner membrane. Essential component of the PAM complex, a complex required for the translocation of transit peptide-containing proteins from the inner membrane into the mitochondrial matrix in an ATP-dependent manner. In the complex, it is required to stimulate activity of mtHSP70 (SSC1). The chain is Mitochondrial import inner membrane translocase subunit TIM14 (PAM18) from Saccharomyces cerevisiae (strain ATCC 204508 / S288c) (Baker's yeast).